Reading from the N-terminus, the 390-residue chain is Putative glutamate--cysteine ligase 2 (390 aa).

This sequence belongs to the glutamate--cysteine ligase type 2 family. YbdK subfamily.

It carries out the reaction L-cysteine + L-glutamate + ATP = gamma-L-glutamyl-L-cysteine + ADP + phosphate + H(+). Functionally, ATP-dependent carboxylate-amine ligase which exhibits weak glutamate--cysteine ligase activity. The chain is Putative glutamate--cysteine ligase 2 from Chloroflexus aggregans (strain MD-66 / DSM 9485).